A 188-amino-acid chain; its full sequence is Ribosome-recycling factor (188 aa).

This sequence belongs to the RRF family.

The protein resides in the cytoplasm. Responsible for the release of ribosomes from messenger RNA at the termination of protein biosynthesis. May increase the efficiency of translation by recycling ribosomes from one round of translation to another. The sequence is that of Ribosome-recycling factor from Gluconobacter oxydans (strain 621H) (Gluconobacter suboxydans).